Here is a 197-residue protein sequence, read N- to C-terminus: UPF0301 protein BAV3012 (197 aa).

It belongs to the UPF0301 (AlgH) family.

This chain is UPF0301 protein BAV3012, found in Bordetella avium (strain 197N).